A 425-amino-acid chain; its full sequence is Enolase (425 aa).

Residue Gln163 participates in (2R)-2-phosphoglycerate binding. Catalysis depends on Glu205, which acts as the Proton donor. Positions 242, 285, and 312 each coordinate Mg(2+). Residues Lys337, Arg366, Ser367, and Lys388 each coordinate (2R)-2-phosphoglycerate. The Proton acceptor role is filled by Lys337.

It belongs to the enolase family. It depends on Mg(2+) as a cofactor.

Its subcellular location is the cytoplasm. The protein resides in the secreted. The protein localises to the cell surface. The enzyme catalyses (2R)-2-phosphoglycerate = phosphoenolpyruvate + H2O. Its pathway is carbohydrate degradation; glycolysis; pyruvate from D-glyceraldehyde 3-phosphate: step 4/5. In terms of biological role, catalyzes the reversible conversion of 2-phosphoglycerate (2-PG) into phosphoenolpyruvate (PEP). It is essential for the degradation of carbohydrates via glycolysis. The polypeptide is Enolase (Ruegeria sp. (strain TM1040) (Silicibacter sp.)).